A 496-amino-acid polypeptide reads, in one-letter code: UDP-N-acetylmuramoyl-L-alanyl-D-glutamate--2,6-diaminopimelate ligase (496 aa).

Position 32 (Ser-32) interacts with UDP-N-acetyl-alpha-D-muramoyl-L-alanyl-D-glutamate. 116–122 lines the ATP pocket; sequence GTNGKTT. UDP-N-acetyl-alpha-D-muramoyl-L-alanyl-D-glutamate-binding positions include 158–159, Ser-185, Gln-191, and Arg-193; that span reads TT. Position 225 is an N6-carboxylysine (Lys-225). Residues Arg-389, 413–416, Gly-464, and Glu-468 contribute to the meso-2,6-diaminopimelate site; that span reads DNPR. The Meso-diaminopimelate recognition motif motif lies at 413-416; the sequence is DNPR.

This sequence belongs to the MurCDEF family. MurE subfamily. The cofactor is Mg(2+). Post-translationally, carboxylation is probably crucial for Mg(2+) binding and, consequently, for the gamma-phosphate positioning of ATP.

The protein resides in the cytoplasm. The catalysed reaction is UDP-N-acetyl-alpha-D-muramoyl-L-alanyl-D-glutamate + meso-2,6-diaminopimelate + ATP = UDP-N-acetyl-alpha-D-muramoyl-L-alanyl-gamma-D-glutamyl-meso-2,6-diaminopimelate + ADP + phosphate + H(+). Its pathway is cell wall biogenesis; peptidoglycan biosynthesis. In terms of biological role, catalyzes the addition of meso-diaminopimelic acid to the nucleotide precursor UDP-N-acetylmuramoyl-L-alanyl-D-glutamate (UMAG) in the biosynthesis of bacterial cell-wall peptidoglycan. In Nostoc sp. (strain PCC 7120 / SAG 25.82 / UTEX 2576), this protein is UDP-N-acetylmuramoyl-L-alanyl-D-glutamate--2,6-diaminopimelate ligase.